Consider the following 343-residue polypeptide: Beta-ketoacyl-[acyl-carrier-protein] synthase III 1 (343 aa).

Residues cysteine 122 and histidine 268 contribute to the active site. The tract at residues 269-273 (QANVR) is ACP-binding. Asparagine 299 is an active-site residue.

The protein belongs to the thiolase-like superfamily. FabH family. In terms of assembly, homodimer.

The protein resides in the cytoplasm. It carries out the reaction malonyl-[ACP] + acetyl-CoA + H(+) = 3-oxobutanoyl-[ACP] + CO2 + CoA. It participates in lipid metabolism; fatty acid biosynthesis. In terms of biological role, essential enzyme that catalyzes the condensation reaction of fatty acid synthesis by the addition to an acyl acceptor of two carbons from malonyl-ACP. Catalyzes the first condensation reaction which initiates fatty acid synthesis and may therefore play a role in governing the total rate of fatty acid production. Possesses both acetoacetyl-ACP synthase and acetyl transacylase activities. Its substrate specificity determines the biosynthesis of branched-chain of fatty acids. The sequence is that of Beta-ketoacyl-[acyl-carrier-protein] synthase III 1 from Streptomyces coelicolor (strain ATCC BAA-471 / A3(2) / M145).